The following is a 445-amino-acid chain: Transcriptional enhancer factor TEF-4 (445 aa).

Disordered regions lie at residues 1 to 47 and 191 to 217; these read MGDP…VWSP and PPAS…SPPA. Positions 25 to 37 are enriched in gly residues; the sequence is EGTGGSEGVGGDG. The TEA DNA-binding region spans 38–114; it reads SPDAEGVWSP…QVLARRKSRE (77 aa). Residues 172–445 form a transcriptional activation region; it reads WNVPDVKPFS…QYHIYRLVRD (274 aa). The span at 199 to 216 shows a compositional bias: pro residues; that stretch reads YEPPPALSPLPPPAPSPP.

Interacts with YAP1 and WWTR1/TAZ. Highest expression in brain. High levels also found in lung, testis and ovarian follicle cells. Lower levels in heart and spleen.

It localises to the nucleus. In terms of biological role, transcription factor which plays a key role in the Hippo signaling pathway, a pathway involved in organ size control and tumor suppression by restricting proliferation and promoting apoptosis. The core of this pathway is composed of a kinase cascade wherein MST1/MST2, in complex with its regulatory protein SAV1, phosphorylates and activates LATS1/2 in complex with its regulatory protein MOB1, which in turn phosphorylates and inactivates YAP1 oncoprotein and WWTR1/TAZ. Acts by mediating gene expression of YAP1 and WWTR1/TAZ, thereby regulating cell proliferation, migration and epithelial mesenchymal transition (EMT) induction. Binds to the SPH and GT-IIC 'enhansons' (5'-GTGGAATGT-3'). May be involved in the gene regulation of neural development. Binds to the M-CAT motif. The chain is Transcriptional enhancer factor TEF-4 (Tead2) from Mus musculus (Mouse).